The chain runs to 75 residues: Tautomerase PptA (75 aa).

The Proton acceptor; via imino nitrogen role is filled by Pro2.

The protein belongs to the 4-oxalocrotonate tautomerase family. PptA subfamily. Homodimer.

It is found in the cytoplasm. The chain is Tautomerase PptA from Klebsiella pneumoniae subsp. pneumoniae (strain ATCC 700721 / MGH 78578).